We begin with the raw amino-acid sequence, 637 residues long: CD2-associated protein (637 aa).

Residues Met-1–Arg-59 form the SH3 1; truncated domain. The interaction with ANLN and localization to the midbody stretch occupies residues Met-1–Asn-175. Lys-58 participates in a covalent cross-link: Glycyl lysine isopeptide (Lys-Gly) (interchain with G-Cter in SUMO2). Residues Ser-80 and Ser-86 each carry the phosphoserine modification. Residues Thr-108–Ser-167 enclose the SH3 2 domain. The segment covering Glu-166–Gln-177 has biased composition (basic and acidic residues). Residues Glu-166–Lys-209 form a disordered region. Ser-224 is modified (phosphoserine). The tract at residues Lys-226–Thr-254 is disordered. The SH3 3 domain maps to Lys-269–Glu-330. The tract at residues Lys-333–Arg-455 is disordered. 3 short sequence motifs (SH3-binding) span residues Pro-336–Pro-352, Lys-378–Lys-397, and Pro-410–Pro-422. Positions Pro-341 to Lys-351 are enriched in pro residues. Positions Ala-356–Pro-379 are enriched in basic and acidic residues. The segment covering Ile-437 to Pro-449 has biased composition (basic and acidic residues). Residues Ser-458, Ser-469, Ser-510, and Ser-514 each carry the phosphoserine modification. Residues His-488–Lys-555 form a disordered region. Residues Lys-517–Ala-539 show a composition bias toward basic and acidic residues. Lys-523 participates in a covalent cross-link: Glycyl lysine isopeptide (Lys-Gly) (interchain with G-Cter in SUMO2). The segment covering Ser-540–Lys-555 has biased composition (low complexity). Thr-563 is subject to Phosphothreonine. Residues Arg-578 to Leu-636 are a coiled coil. Ser-580 is modified (phosphoserine).

As to quaternary structure, homodimer. Interacts with F-actin, PKD2, NPHS1 and NPHS2. Interacts with WTIP. Interacts with DDN; interaction is direct. Interacts (via SH3 2 domain) with CBL (via phosphorylated C-terminus). Interacts with BCAR1/p130Cas (via SH3 domain). Interacts with MVB12A and ARHGAP17. Interacts with ANLN, CD2 and CBLB. Interacts with PDCD6IP and TSG101. Interacts with RIN3. Interacts directly with RET (inactive) and CBLC; upon RET activation by GDNF suggested to dissociate from RET as CBLC:CD2AP complex. Interacts with CGNL1 and SH3BP1; probably part of a complex at cell junctions. Interacts with CAPZA1. Post-translationally, phosphorylated on tyrosine residues; probably by c-Abl, Fyn and c-Src. In terms of tissue distribution, expressed in podocytes (at protein level).

Its subcellular location is the cytoplasm. The protein localises to the cytoskeleton. It is found in the cell projection. The protein resides in the ruffle. It localises to the cell junction. In terms of biological role, seems to act as an adapter protein between membrane proteins and the actin cytoskeleton. In collaboration with CBLC, modulates the rate of RET turnover and may act as regulatory checkpoint that limits the potency of GDNF on neuronal survival. Controls CBLC function, converting it from an inhibitor to a promoter of RET degradation. May play a role in receptor clustering and cytoskeletal polarity in the junction between T-cell and antigen-presenting cell. May anchor the podocyte slit diaphragm to the actin cytoskeleton in renal glomerolus. Also required for cytokinesis. Plays a role in epithelial cell junctions formation. The polypeptide is CD2-associated protein (Cd2ap) (Mus musculus (Mouse)).